We begin with the raw amino-acid sequence, 218 residues long: Protein-methionine-sulfoxide reductase heme-binding subunit MsrQ (218 aa).

5 consecutive transmembrane segments (helical) span residues 8–28 (VIVA…LLGW), 60–80 (FLLI…AVLI), 86–106 (LGLY…TLDL), 121–141 (PYIT…ITST), and 155–175 (VHML…WLVK).

The protein belongs to the MsrQ family. Heterodimer of a catalytic subunit (MsrP) and a heme-binding subunit (MsrQ). Requires FMN as cofactor. It depends on heme b as a cofactor.

The protein localises to the cell inner membrane. In terms of biological role, part of the MsrPQ system that repairs oxidized periplasmic proteins containing methionine sulfoxide residues (Met-O), using respiratory chain electrons. Thus protects these proteins from oxidative-stress damage caused by reactive species of oxygen and chlorine generated by the host defense mechanisms. MsrPQ is essential for the maintenance of envelope integrity under bleach stress, rescuing a wide series of structurally unrelated periplasmic proteins from methionine oxidation. MsrQ provides electrons for reduction to the reductase catalytic subunit MsrP, using the quinone pool of the respiratory chain. The chain is Protein-methionine-sulfoxide reductase heme-binding subunit MsrQ from Xanthomonas oryzae pv. oryzae (strain MAFF 311018).